Consider the following 471-residue polypeptide: tRNA-2-methylthio-N(6)-dimethylallyladenosine synthase (471 aa).

In terms of domain architecture, MTTase N-terminal spans 36-154 (KTYHIITYGC…FPQLLYKAIT (119 aa)). [4Fe-4S] cluster contacts are provided by cysteine 45, cysteine 81, cysteine 115, cysteine 191, cysteine 195, and cysteine 198. In terms of domain architecture, Radical SAM core spans 177 to 407 (RREGVSAFVN…VKLVEEIALK (231 aa)). The region spanning 410–471 (QQMLGKVCEI…SRHWLYGEVI (62 aa)) is the TRAM domain.

It belongs to the methylthiotransferase family. MiaB subfamily. Monomer. Requires [4Fe-4S] cluster as cofactor.

The protein localises to the cytoplasm. It carries out the reaction N(6)-dimethylallyladenosine(37) in tRNA + (sulfur carrier)-SH + AH2 + 2 S-adenosyl-L-methionine = 2-methylsulfanyl-N(6)-dimethylallyladenosine(37) in tRNA + (sulfur carrier)-H + 5'-deoxyadenosine + L-methionine + A + S-adenosyl-L-homocysteine + 2 H(+). In terms of biological role, catalyzes the methylthiolation of N6-(dimethylallyl)adenosine (i(6)A), leading to the formation of 2-methylthio-N6-(dimethylallyl)adenosine (ms(2)i(6)A) at position 37 in tRNAs that read codons beginning with uridine. The protein is tRNA-2-methylthio-N(6)-dimethylallyladenosine synthase of Caldicellulosiruptor saccharolyticus (strain ATCC 43494 / DSM 8903 / Tp8T 6331).